We begin with the raw amino-acid sequence, 363 residues long: Adenosine deaminase (363 aa).

Zn(2+) contacts are provided by His-42 and His-44. Residues 44–46, Asp-172, and Gly-201 each bind a purine D-ribonucleoside; that span reads HLD. Residues 170 to 184 form a gating helix loop; regulates binding affinity for substrates and thus substrate selectivity region; the sequence is IGDTGHRAADIKASA. Residue His-226 coordinates Zn(2+). A purine D-ribonucleoside contacts are provided by Glu-229, His-253, and Asp-310. Asp-310 is a Zn(2+) binding site.

Belongs to the metallo-dependent hydrolases superfamily. Adenosine and AMP deaminases family. Zn(2+) serves as cofactor.

The enzyme catalyses adenosine + H2O + H(+) = inosine + NH4(+). It carries out the reaction S-methyl-5'-thioadenosine + H2O + H(+) = S-methyl-5'-thioinosine + NH4(+). It participates in purine metabolism; purine nucleoside salvage. Inhibited by coformycin and methylthiocoformycin (MT-coformycin). Its function is as follows. Catalyzes the hydrolytic deamination of adenosine to produce inosine. Unlike mammalian adenosine deaminases, also catalyzes the deamination of 5'-methylthioadenosine (MTA), a by-product of polyamine biosynthesis, to produce 5'-methylthioinosine (MTI). Plays an essential role in the purine salvage pathway which allows the parasite to use host cell purines for the synthesis of nucleic acids. The polypeptide is Adenosine deaminase (Plasmodium knowlesi).